The primary structure comprises 93 residues: Small ribosomal subunit protein uS19 (93 aa).

The interval 1 to 23 is disordered; sequence MPRSLKKGPFVDDHLQKKVDAEN. Over residues 9 to 23 the composition is skewed to basic and acidic residues; that stretch reads PFVDDHLQKKVDAEN.

Belongs to the universal ribosomal protein uS19 family.

In terms of biological role, protein S19 forms a complex with S13 that binds strongly to the 16S ribosomal RNA. This chain is Small ribosomal subunit protein uS19, found in Nocardioides sp. (strain ATCC BAA-499 / JS614).